Reading from the N-terminus, the 393-residue chain is MIAPTTRKDLMIINMGPHHPSMHGVLRLIITLDGEDVIDCEPILGYLHRGMEKIAENRTILQYLPYVTRWDYLATMFTEAISVNGPEQLGNIQVPKRASYIRTIMLELSRIASHLLWLGPFMADIGAQTPFFYIFREREFIYDLFEAATGMRMMHNFFRIGGIAADLPHGWIDKCLDFCDYFLRGVVEYQKLITRNPIFLERVEGVGIIGAEEALNWGLSGPMLRASGIQWDLRKMDHYECYDEFDWEVQWQKEGDSLARYLVRISEMTESIKIIQQALERIPGGPFENLEIRRFDRIKDTEWNDFEYRFISKKPSPTFELSKQELYVRVEAPKGELGIFLIGDQSVFPWRWKIRPPGFINLQILSQLVKRMKLADIMTILGSIDIIMGEVDR.

It belongs to the complex I 49 kDa subunit family. As to quaternary structure, NDH is composed of at least 16 different subunits, 5 of which are encoded in the nucleus.

It localises to the plastid. The protein resides in the chloroplast thylakoid membrane. The enzyme catalyses a plastoquinone + NADH + (n+1) H(+)(in) = a plastoquinol + NAD(+) + n H(+)(out). It catalyses the reaction a plastoquinone + NADPH + (n+1) H(+)(in) = a plastoquinol + NADP(+) + n H(+)(out). Its function is as follows. NDH shuttles electrons from NAD(P)H:plastoquinone, via FMN and iron-sulfur (Fe-S) centers, to quinones in the photosynthetic chain and possibly in a chloroplast respiratory chain. The immediate electron acceptor for the enzyme in this species is believed to be plastoquinone. Couples the redox reaction to proton translocation, and thus conserves the redox energy in a proton gradient. The protein is NAD(P)H-quinone oxidoreductase subunit H, chloroplastic of Jasminum nudiflorum (Winter jasmine).